Reading from the N-terminus, the 402-residue chain is NAD-dependent protein deacetylase sirtuin-7 (402 aa).

The segment at 1 to 23 is disordered; the sequence is MAAGGGLSRSERKAAERVRRLRE. Over residues 9–23 the composition is skewed to basic and acidic residues; it reads RSERKAAERVRRLRE. Residues 83–330 form the Deacetylase sirtuin-type domain; the sequence is PEELRRKVRE…QLLMNELGLE (248 aa). NAD(+) is bound by residues 108–127 and 168–171; these read GAGI…NGVW and QNCD. Histidine 188 (proton acceptor) is an active-site residue. Zn(2+)-binding residues include cysteine 196, cysteine 199, cysteine 226, and cysteine 229. Residues 269–271, 298–300, and cysteine 316 contribute to the NAD(+) site; these read GSS and NLQ. Residues 355-402 are disordered; it reads SHSRKSLCRSREEAPPGDQSDPLASAPPILGGWFGRGCAKRAKRKKVA. Arginine 390 bears the Asymmetric dimethylarginine; alternate mark. Arginine 390 is modified (omega-N-methylarginine; alternate). The span at 392-402 shows a compositional bias: basic residues; that stretch reads CAKRAKRKKVA.

Belongs to the sirtuin family. Class IV subfamily. Interacts with UBTF and the RNA polymerase I complex. Interacts with components of the B-WICH complex, such as MYBBP1A, SMARCA5/SNF2H and BAZ1B/WSTF. Interacts with ELK4, leading to stabilization at target promoters for H3K18Ac deacetylation. Interacts with histone H2A and/or histone H2B. Interacts with DNMT1. Interacts with SIRT1. Requires Zn(2+) as cofactor. In terms of processing, phosphorylated during mitosis. Post-translationally, methylation at Arg-390 by PRMT6 inhibits the H3K18Ac histone deacetylase activity, promoting mitochondria biogenesis and maintaining mitochondria respiration. Ubiquitinated via 'Lys-63'-linked ubiquitin chains. Deubiquitinated by USP7, inhibiting the H3K18Ac histone deacetylase activity and regulating gluconeogenesis. Ubiquitinated by E3 ubiquitin-protein ligase complex containing FBXO7; leading to proteasomal degradation. In terms of tissue distribution, detected in liver, spleen and testis. Detected in embryos.

It is found in the nucleus. It localises to the nucleolus. The protein resides in the nucleoplasm. The protein localises to the chromosome. Its subcellular location is the cytoplasm. It carries out the reaction N(6)-acetyl-L-lysyl-[protein] + NAD(+) + H2O = 2''-O-acetyl-ADP-D-ribose + nicotinamide + L-lysyl-[protein]. It catalyses the reaction N(6)-glutaryl-L-lysyl-[protein] + NAD(+) + H2O = 2''-O-glutaryl-ADP-D-ribose + nicotinamide + L-lysyl-[protein]. The catalysed reaction is N(6)-succinyl-L-lysyl-[protein] + NAD(+) + H2O = 2''-O-succinyl-ADP-D-ribose + nicotinamide + L-lysyl-[protein]. The enzyme catalyses N(6)-propanoyl-L-lysyl-[protein] + NAD(+) + H2O = 3''-O-propanoyl-ADP-D-ribose + nicotinamide + L-lysyl-[protein]. It carries out the reaction N(6)-decanoyl-L-lysyl-[protein] + NAD(+) + H2O = 2''-O-decanoyl-ADP-D-ribose + nicotinamide + L-lysyl-[protein]. Its activity is regulated as follows. NAD-dependent protein-lysine deacetylase and deacylase activities are activated by nucleic acids. Histone deacetylase activity is activated by DNA. Protein-lysine deacylase activity is activated by RNA. H3K18Ac histone deacetylase activity is inhibited by methylation at Arg-390. H3K18Ac histone deacetylase activity is inhibited by deubiquitination by USP7. Its function is as follows. NAD-dependent protein-lysine deacylase that can act both as a deacetylase or deacylase (desuccinylase, depropionylase and deglutarylase), depending on the context. Also acts as a dedecanoylase. Specifically mediates deacetylation of histone H3 at 'Lys-18' (H3K18Ac). In contrast to other histone deacetylases, displays strong preference for a specific histone mark, H3K18Ac, directly linked to control of gene expression. H3K18Ac is mainly present around the transcription start site of genes and has been linked to activation of nuclear hormone receptors; SIRT7 thereby acts as a transcription repressor. Moreover, H3K18 hypoacetylation has been reported as a marker of malignancy in various cancers and seems to maintain the transformed phenotype of cancer cells. Also able to mediate deacetylation of histone H3 at 'Lys-36' (H3K36Ac) in the context of nucleosomes. Also mediates deacetylation of non-histone proteins, such as ATM, CDK9, DDX21, DDB1, FBL, FKBP5/FKBP51, GABPB1, RAN, RRP9/U3-55K and POLR1E/PAF53. Enriched in nucleolus where it stimulates transcription activity of the RNA polymerase I complex. Acts by mediating the deacetylation of the RNA polymerase I subunit POLR1E/PAF53, thereby promoting the association of RNA polymerase I with the rDNA promoter region and coding region. In response to metabolic stress, SIRT7 is released from nucleoli leading to hyperacetylation of POLR1E/PAF53 and decreased RNA polymerase I transcription. Required to restore the transcription of ribosomal RNA (rRNA) at the exit from mitosis. Promotes pre-ribosomal RNA (pre-rRNA) cleavage at the 5'-terminal processing site by mediating deacetylation of RRP9/U3-55K, a core subunit of the U3 snoRNP complex. Mediates 'Lys-37' deacetylation of Ran, thereby regulating the nuclear export of NF-kappa-B subunit RELA/p65. Acts as a regulator of DNA damage repair by mediating deacetylation of ATM during the late stages of DNA damage response, promoting ATM dephosphorylation and deactivation. May also deacetylate p53/TP53 and promotes cell survival, however such data need additional confirmation. Suppresses the activity of the DCX (DDB1-CUL4-X-box) E3 ubiquitin-protein ligase complexes by mediating deacetylation of DDB1, which prevents the interaction between DDB1 and CUL4 (CUL4A or CUL4B). Activates RNA polymerase II transcription by mediating deacetylation of CDK9, thereby promoting 'Ser-2' phosphorylation of the C-terminal domain (CTD) of RNA polymerase II. Deacetylates FBL, promoting histone-glutamine methyltransferase activity of FBL. Acts as a regulator of mitochondrial function by catalyzing deacetylation of GABPB1. Regulates Akt/AKT1 activity by mediating deacetylation of FKBP5/FKBP51. Required to prevent R-loop-associated DNA damage and transcription-associated genomic instability by mediating deacetylation and subsequent activation of DDX21, thereby overcoming R-loop-mediated stalling of RNA polymerases. In addition to protein deacetylase activity, also acts as protein-lysine deacylase. Acts as a protein depropionylase by mediating depropionylation of Osterix (SP7), thereby regulating bone formation by osteoblasts. Acts as a histone deglutarylase by mediating deglutarylation of histone H4 on 'Lys-91' (H4K91glu); a mark that destabilizes nucleosomes by promoting dissociation of the H2A-H2B dimers from nucleosomes. Acts as a histone desuccinylase: in response to DNA damage, recruited to DNA double-strand breaks (DSBs) and catalyzes desuccinylation of histone H3 on 'Lys-122' (H3K122succ), thereby promoting chromatin condensation and DSB repair. Also promotes DSB repair by promoting H3K18Ac deacetylation, regulating non-homologous end joining (NHEJ). Along with its role in DNA repair, required for chromosome synapsis during prophase I of female meiosis by catalyzing H3K18Ac deacetylation. Involved in transcriptional repression of LINE-1 retrotransposon via H3K18Ac deacetylation, and promotes their association with the nuclear lamina. Required to stabilize ribosomal DNA (rDNA) heterochromatin and prevent cellular senescence induced by rDNA instability. Acts as a negative regulator of SIRT1 by preventing autodeacetylation of SIRT1, restricting SIRT1 deacetylase activity. The protein is NAD-dependent protein deacetylase sirtuin-7 of Mus musculus (Mouse).